Consider the following 372-residue polypeptide: Ligninase H2 (372 aa).

Positions 1–21 are cleaved as a signal peptide; it reads MAFKQLLAALSVALTLQVTQA. A propeptide spanning residues 22-28 is cleaved from the precursor; the sequence is APNLDKR. 4 disulfides stabilise this stretch: cysteine 31–cysteine 44, cysteine 43–cysteine 314, cysteine 63–cysteine 149, and cysteine 278–cysteine 344. The active-site Proton acceptor is the histidine 76. Residues aspartate 77, glycine 95, aspartate 97, and serine 99 each coordinate Ca(2+). Residue histidine 205 participates in heme b binding. Ca(2+) is bound by residues serine 206, aspartate 223, threonine 225, glutamine 228, and aspartate 230. Asparagine 286 carries an N-linked (GlcNAc...) asparagine glycan.

Belongs to the peroxidase family. Ligninase subfamily. The cofactor is heme b. Requires Ca(2+) as cofactor.

The enzyme catalyses 1-(3,4-dimethoxyphenyl)-2-(2-methoxyphenoxy)propane-1,3-diol + H2O2 = 3,4-dimethoxybenzaldehyde + guaiacol + glycolaldehyde + H2O. It catalyses the reaction 2 (3,4-dimethoxyphenyl)methanol + H2O2 = 2 (3,4-dimethoxyphenyl)methanol radical + 2 H2O. Its pathway is secondary metabolite metabolism; lignin degradation. In terms of biological role, depolymerization of lignin. Catalyzes the C(alpha)-C(beta) cleavage of the propyl side chains of lignin. In Phanerodontia chrysosporium (White-rot fungus), this protein is Ligninase H2 (GLG4).